A 277-amino-acid polypeptide reads, in one-letter code: Sulfur carrier protein FdhD (277 aa).

The active-site Cysteine persulfide intermediate is the C123. 263–268 (FVRGNK) contacts Mo-bis(molybdopterin guanine dinucleotide).

The protein belongs to the FdhD family.

Its subcellular location is the cytoplasm. Its function is as follows. Required for formate dehydrogenase (FDH) activity. Acts as a sulfur carrier protein that transfers sulfur from IscS to the molybdenum cofactor prior to its insertion into FDH. The chain is Sulfur carrier protein FdhD from Corynebacterium efficiens (strain DSM 44549 / YS-314 / AJ 12310 / JCM 11189 / NBRC 100395).